A 512-amino-acid polypeptide reads, in one-letter code: ATP synthase subunit alpha (512 aa).

169-176 (GDRQTGKT) contributes to the ATP binding site.

Belongs to the ATPase alpha/beta chains family. In terms of assembly, F-type ATPases have 2 components, CF(1) - the catalytic core - and CF(0) - the membrane proton channel. CF(1) has five subunits: alpha(3), beta(3), gamma(1), delta(1), epsilon(1). CF(0) has three main subunits: a(1), b(2) and c(9-12). The alpha and beta chains form an alternating ring which encloses part of the gamma chain. CF(1) is attached to CF(0) by a central stalk formed by the gamma and epsilon chains, while a peripheral stalk is formed by the delta and b chains.

It is found in the cell membrane. It catalyses the reaction ATP + H2O + 4 H(+)(in) = ADP + phosphate + 5 H(+)(out). Its function is as follows. Produces ATP from ADP in the presence of a proton gradient across the membrane. The alpha chain is a regulatory subunit. The chain is ATP synthase subunit alpha from Buchnera aphidicola subsp. Acyrthosiphon pisum (strain 5A).